A 296-amino-acid chain; its full sequence is Glycine--tRNA ligase alpha subunit (296 aa).

The protein belongs to the class-II aminoacyl-tRNA synthetase family. As to quaternary structure, tetramer of two alpha and two beta subunits.

The protein localises to the cytoplasm. It catalyses the reaction tRNA(Gly) + glycine + ATP = glycyl-tRNA(Gly) + AMP + diphosphate. This is Glycine--tRNA ligase alpha subunit from Francisella tularensis subsp. holarctica (strain FTNF002-00 / FTA).